Reading from the N-terminus, the 254-residue chain is Thiazole synthase (254 aa).

K95 serves as the catalytic Schiff-base intermediate with DXP. Residues G156, 182 to 183 (AG), and 204 to 205 (NT) each bind 1-deoxy-D-xylulose 5-phosphate.

The protein belongs to the ThiG family. In terms of assembly, homotetramer. Forms heterodimers with either ThiH or ThiS.

The protein localises to the cytoplasm. It carries out the reaction [ThiS sulfur-carrier protein]-C-terminal-Gly-aminoethanethioate + 2-iminoacetate + 1-deoxy-D-xylulose 5-phosphate = [ThiS sulfur-carrier protein]-C-terminal Gly-Gly + 2-[(2R,5Z)-2-carboxy-4-methylthiazol-5(2H)-ylidene]ethyl phosphate + 2 H2O + H(+). The protein operates within cofactor biosynthesis; thiamine diphosphate biosynthesis. Its function is as follows. Catalyzes the rearrangement of 1-deoxy-D-xylulose 5-phosphate (DXP) to produce the thiazole phosphate moiety of thiamine. Sulfur is provided by the thiocarboxylate moiety of the carrier protein ThiS. In vitro, sulfur can be provided by H(2)S. The protein is Thiazole synthase of Shewanella sp. (strain W3-18-1).